A 427-amino-acid polypeptide reads, in one-letter code: MADTKAKITLTGDTTIELDVLKGTLGQDVIDIRSLGSKGVFTFDPGFTSTASCESKITFIDGDEGILLHRGFPIDQLATDSNYLEVCYILLYGEKPTQEEYDEFRTTVTRHTMIHEQITRLFHAFRRDSHPMAVMCGITGALAAFYHDSLDVNNPRHREIAAFRLLSKMPTMAAMCYKYSIGQPFVYPRNDLSYAGNFLNMMFSTPCETYEVNPVLERAMDRILILHADHEQNASTSTVRTAGSSGANPFACIAAGIASLWGPAHGGANEAALKMLEEISSVKHIPEFVRRAKDKNDSFRLMGFGHRVYKNYDPRATVMRETCHEVLKELGTKDDLLEVAMELEHIALNDPYFIEKKLYPNVDFYSGIILKAMGIPSSMFTVIFAMARTVGWIAHWNEMHTDGMKIARPRQLYTGYDKRDFKSALKR.

Active-site residues include H306 and D363.

Belongs to the citrate synthase family. Homohexamer.

It catalyses the reaction oxaloacetate + acetyl-CoA + H2O = citrate + CoA + H(+). Its pathway is carbohydrate metabolism; tricarboxylic acid cycle; isocitrate from oxaloacetate: step 1/2. Allosterically inhibited by NADH. The sequence is that of Citrate synthase (gltA) from Salmonella typhimurium (strain LT2 / SGSC1412 / ATCC 700720).